Consider the following 276-residue polypeptide: Outer membrane lipoprotein 2 (276 aa).

Residues 1 to 19 (MNFKKLLGVALVSALALTA) form the signal peptide. C20 is lipidated: N-palmitoyl cysteine. Residue C20 is the site of S-diacylglycerol cysteine attachment.

This sequence belongs to the NlpA lipoprotein family.

It localises to the cell outer membrane. The protein is Outer membrane lipoprotein 2 (plpB) of Mannheimia haemolytica (Pasteurella haemolytica).